Here is a 105-residue protein sequence, read N- to C-terminus: MRISPLIAGLIGGFTAAILQALFKVFPPPAYGICIACHTRDLVNWIINHLFGTTLGMALVSKAFPVLTVVGIFIGALITTFIYKETELKQTHSPVYWFHIRNFSY.

Helical transmembrane passes span 3-23 (ISPL…QALF), 41-61 (DLVN…ALVS), and 63-83 (AFPV…TFIY).

Its subcellular location is the cell membrane. This is an uncharacterized protein from Methanocaldococcus jannaschii (strain ATCC 43067 / DSM 2661 / JAL-1 / JCM 10045 / NBRC 100440) (Methanococcus jannaschii).